We begin with the raw amino-acid sequence, 332 residues long: Anthranilate phosphoribosyltransferase (332 aa).

5-phospho-alpha-D-ribose 1-diphosphate is bound by residues G79, 82–83 (GD), T87, 89–92 (NIST), 107–115 (KHGNRSVSS), and S119. G79 serves as a coordination point for anthranilate. S91 provides a ligand contact to Mg(2+). N110 provides a ligand contact to anthranilate. An anthranilate-binding site is contributed by R165. D223 and E224 together coordinate Mg(2+).

Belongs to the anthranilate phosphoribosyltransferase family. Homodimer. Mg(2+) serves as cofactor.

The enzyme catalyses N-(5-phospho-beta-D-ribosyl)anthranilate + diphosphate = 5-phospho-alpha-D-ribose 1-diphosphate + anthranilate. The protein operates within amino-acid biosynthesis; L-tryptophan biosynthesis; L-tryptophan from chorismate: step 2/5. In terms of biological role, catalyzes the transfer of the phosphoribosyl group of 5-phosphorylribose-1-pyrophosphate (PRPP) to anthranilate to yield N-(5'-phosphoribosyl)-anthranilate (PRA). In Vibrio vulnificus (strain CMCP6), this protein is Anthranilate phosphoribosyltransferase.